A 488-amino-acid polypeptide reads, in one-letter code: SAGA complex subunit HFI1 (488 aa).

Disordered regions lie at residues 1 to 58 and 352 to 383; these read MSAI…QGPN and QLDDDKNEDECADEAKSINNGNNSSKDDIGDI. Positions 37–58 are enriched in polar residues; the sequence is AVSNHTEPNNGNNETAEPQGPN.

In terms of assembly, component of the 1.8 MDa SAGA (Spt-Ada-Gcn5 acetyltransferase) complex, which is composed of 19 subunits TRA1, SPT7, TAF5, NGG1/ADA3, SGF73, SPT20/ADA5, SPT8, TAF12, TAF6, HFI1/ADA1, UBP8, GCN5, ADA2, SPT3, SGF29, TAF10, TAF9, SGF11 and SUS1. The SAGA complex is composed of 4 modules, namely the HAT (histone acetyltransferase) module (GCN5, ADA2, NGG1/ADA3 and SGF29), the DUB (deubiquitinating) module (UBP8, SGF11, SGF73 and SUS1), the core or TAF (TBP-associated factor) module (TAF5, TAF6, TAF9, TAF10 and TAF12), and the Tra1 or SPT (Suppressor of Ty) module (TRA1, HFI1/ADA1, SPT3, SPT7, SPT8 and SPT20/ADA5). The Tra1/SPT module binds activators, the core module recruits TBP (TATA-binding protein), the HAT module contains the histone H3 acetyltransferase GCN5, and the DUB module comprises the histone H2B deubiquitinase UBP8. Also identified in an altered form of SAGA, named SALSA (SAGA altered, Spt8 absent) or SLIK (SAGA-like) complex, which contains a C-terminal truncated form of SPT7 and is missing SPT8. However, it has been shown that the SAGA and SAGA-like SALSA/SLIK transcriptional coactivators are structurally and biochemically equivalent. Component of an ADA/GCN5 complex that consists of HFI1/ADA1, ADA2, NGG1/ADA3, SPT20/ADA5 and GCN5 and probably is a subcomplex of SAGA.

Its subcellular location is the nucleus. Component of the transcription coactivator SAGA complex. SAGA acts as a general cofactor required for essentially all RNA polymerase II transcription. At the promoters, SAGA is required for transcription pre-initiation complex (PIC) recruitment. It influences RNA polymerase II transcriptional activity through different activities such as TBP interaction (via core/TAF module) and promoter selectivity, interaction with transcription activators (via Tra1/SPT module), and chromatin modification through histone acetylation (via HAT module) and deubiquitination (via DUB module). SAGA preferentially acetylates histones H3 (to form H3K9ac, H3K14ac, H3K18ac and H3K23ac) and H2B and deubiquitinates histone H2B. SAGA interacts with DNA via upstream activating sequences (UASs). Also identified in a modified version of SAGA named SALSA or SLIK. The cleavage of SPT7 and the absence of the SPT8 subunit in SLIK neither drive any major conformational differences in its structure compared with SAGA, nor significantly affect HAT, DUB, or DNA-binding activities. The polypeptide is SAGA complex subunit HFI1 (HFI1) (Saccharomyces cerevisiae (strain ATCC 204508 / S288c) (Baker's yeast)).